The primary structure comprises 240 residues: Fibronectin type III domain-containing protein 5 (240 aa).

Residues 1–10 (MQAARGGAGR) show a composition bias toward gly residues. A disordered region spans residues 1–30 (MQAARGGAGRPGREGRGLERECERSPGVGA). Residues 11–24 (PGREGRGLERECER) are compositionally biased toward basic and acidic residues. The region spanning 64 to 155 (APVNVTVRHL…EPVLFKTPRE (92 aa)) is the Fibronectin type-III domain. N-linked (GlcNAc...) asparagine glycosylation is found at asparagine 67 and asparagine 112. Residues 181–201 (GEVLIIVVVLFMWAGVIALFC) traverse the membrane as a helical segment. A compositionally biased stretch (basic and acidic residues) spans 210 to 221 (NEPNNNKEKTKS). Positions 210 to 240 (NEPNNNKEKTKSASETSTPEHQGGGLLRSKI) are disordered. The segment covering 231–240 (QGGGLLRSKI) has biased composition (gly residues). The Microbody targeting signal motif lies at 238–240 (SKI).

Dimer; may exist in other oligomeric forms. N-Glycosylated. Post-translationally, the extracellular domain is cleaved and released from the cell membrane.

Its subcellular location is the cell membrane. It is found in the peroxisome membrane. The protein localises to the secreted. Functionally, mediates beneficial effects of muscular exercise. Induces browning of white adipose tissue by stimulating UCP1 expression, at least in part, via the nuclear receptor PPARA. The chain is Fibronectin type III domain-containing protein 5 (Fndc5) from Rattus norvegicus (Rat).